A 116-amino-acid chain; its full sequence is Large ribosomal subunit protein bL20 (116 aa).

It belongs to the bacterial ribosomal protein bL20 family.

In terms of biological role, binds directly to 23S ribosomal RNA and is necessary for the in vitro assembly process of the 50S ribosomal subunit. It is not involved in the protein synthesizing functions of that subunit. This chain is Large ribosomal subunit protein bL20, found in Desulforapulum autotrophicum (strain ATCC 43914 / DSM 3382 / VKM B-1955 / HRM2) (Desulfobacterium autotrophicum).